A 332-amino-acid chain; its full sequence is DNA-directed RNA polymerase subunit alpha (332 aa).

The alpha N-terminal domain (alpha-NTD) stretch occupies residues 1-232; that stretch reads MKGYLKDFLK…DQLSVFVDLE (232 aa). The tract at residues 247 to 332 is alpha C-terminal domain (alpha-CTD); the sequence is IDPVLLRPID…SLGDRARIAG (86 aa).

The protein belongs to the RNA polymerase alpha chain family. As to quaternary structure, homodimer. The RNAP catalytic core consists of 2 alpha, 1 beta, 1 beta' and 1 omega subunit. When a sigma factor is associated with the core the holoenzyme is formed, which can initiate transcription.

The catalysed reaction is RNA(n) + a ribonucleoside 5'-triphosphate = RNA(n+1) + diphosphate. DNA-dependent RNA polymerase catalyzes the transcription of DNA into RNA using the four ribonucleoside triphosphates as substrates. In Halorhodospira halophila (strain DSM 244 / SL1) (Ectothiorhodospira halophila (strain DSM 244 / SL1)), this protein is DNA-directed RNA polymerase subunit alpha.